The following is a 304-amino-acid chain: HPr kinase/phosphorylase (304 aa).

Catalysis depends on residues histidine 136 and lysine 157. 151 to 158 (GESGIGKS) is a binding site for ATP. Serine 158 lines the Mg(2+) pocket. The active-site Proton acceptor; for phosphorylation activity. Proton donor; for dephosphorylation activity is aspartate 175. Positions 198-207 (LEVRGIGIID) are important for the catalytic mechanism of both phosphorylation and dephosphorylation. Glutamate 199 serves as a coordination point for Mg(2+). Residue arginine 240 is part of the active site. Positions 261-266 (PVRPGR) are important for the catalytic mechanism of dephosphorylation.

Belongs to the HPrK/P family. Homohexamer. It depends on Mg(2+) as a cofactor.

It carries out the reaction [HPr protein]-L-serine + ATP = [HPr protein]-O-phospho-L-serine + ADP + H(+). The enzyme catalyses [HPr protein]-O-phospho-L-serine + phosphate + H(+) = [HPr protein]-L-serine + diphosphate. In terms of biological role, catalyzes the ATP- as well as the pyrophosphate-dependent phosphorylation of a specific serine residue in HPr, a phosphocarrier protein of the phosphoenolpyruvate-dependent sugar phosphotransferase system (PTS). HprK/P also catalyzes the pyrophosphate-producing, inorganic phosphate-dependent dephosphorylation (phosphorolysis) of seryl-phosphorylated HPr (P-Ser-HPr). The two antagonistic activities of HprK/P are regulated by several intracellular metabolites, which change their concentration in response to the absence or presence of rapidly metabolisable carbon sources (glucose, fructose, etc.) in the growth medium. Therefore, by controlling the phosphorylation state of HPr, HPrK/P is a sensor enzyme that plays a major role in the regulation of carbon metabolism and sugar transport: it mediates carbon catabolite repression (CCR), and regulates PTS-catalyzed carbohydrate uptake and inducer exclusion. The chain is HPr kinase/phosphorylase from Clostridium botulinum (strain Alaska E43 / Type E3).